A 248-amino-acid chain; its full sequence is Histidine utilization repressor (248 aa).

An HTH gntR-type domain is found at 18–86; it reads APLYARVKQM…QGVGTFVAEP (69 aa). Residues 46-65 constitute a DNA-binding region (H-T-H motif); sequence ESELVNELGFSRMTINRALR.

It participates in amino-acid degradation; L-histidine degradation into L-glutamate [regulation]. In terms of biological role, repressor which binds to the hutP region in the histidine utilization (hut) operon. It blocks the expression of all the hut genes in the absence of inducer. This chain is Histidine utilization repressor (hutC), found in Pseudomonas putida (Arthrobacter siderocapsulatus).